A 77-amino-acid polypeptide reads, in one-letter code: Conotoxin PnMEKL-04 (77 aa).

An N-terminal signal peptide occupies residues 1–19 (MEKLTILLLVAAVLMSTQA). Residues 20–45 (LPQGGGENRLKENIKFLLKRKTAADR) constitute a propeptide that is removed on maturation. 3 disulfide bridges follow: Cys-51–Cys-65, Cys-58–Cys-69, and Cys-64–Cys-73.

Belongs to the conotoxin O2 superfamily. Expressed by the venom duct.

The protein localises to the secreted. The protein is Conotoxin PnMEKL-04 of Conus pennaceus (Feathered cone).